The following is a 509-amino-acid chain: MEEIQRYLQLDRSQQHNFLYPLIFQEYIYALAHDPGLNRNRSILLENPGYNNKFSFLIVKRLITRMYQQNHFLISTNDLNKNEFLGCNKSLYSQMISEGFAFIVEIPFSLRLISSLSSFEGKKIFKSHNLRSIHSTFPFLEDNFAHLNYVLDILIPYPVHLEILVQTLRYWVKDASSLHLLRFFLHEYWNLNSLITSKKPGYSFSKKNQRFFFFLYNSYVYECESTFVFLRNQSSHLRSTSFGALLERIFFYGKIERLVEVFAKDFQVTLWLFKDPFMHYVRYQGKSILASKGTFLLINKWKFYLVNFWQCHFSLCFHTGRIHINQLSNHSRDFMGYLSSVRLNPSMVRSQMLENSFLINNAIKKFDTLVPIIPLIGSLAKANFCTVLGHPISKPVWSDLSDSDIIARFVRICRNLFHYYSGSSKKKTLYRIKYILRLSCARTLARKHKSTVRTFLKRSGSELLEEFLTSEEQVLSLTFPRASSSLGGVYRSRIWYLDIFCINDLANYQ.

This sequence belongs to the intron maturase 2 family. MatK subfamily.

It is found in the plastid. It localises to the chloroplast. Usually encoded in the trnK tRNA gene intron. Probably assists in splicing its own and other chloroplast group II introns. This Nicotiana clevelandii (Wild tobacco) protein is Maturase K.